A 309-amino-acid polypeptide reads, in one-letter code: ADP-L-glycero-D-manno-heptose-6-epimerase (309 aa).

Residues 10-11 (LI), 31-32 (DN), lysine 38, lysine 53, 75-79 (QGACS), and asparagine 92 contribute to the NADP(+) site. The active-site Proton acceptor is the tyrosine 139. Lysine 143 is an NADP(+) binding site. A substrate-binding site is contributed by asparagine 168. The NADP(+) site is built by valine 169 and lysine 177. Lysine 177 acts as the Proton acceptor in catalysis. Residues serine 179, histidine 186, 200–203 (FAGS), arginine 208, and tyrosine 271 contribute to the substrate site.

Belongs to the NAD(P)-dependent epimerase/dehydratase family. HldD subfamily. In terms of assembly, homopentamer. NADP(+) is required as a cofactor.

It carries out the reaction ADP-D-glycero-beta-D-manno-heptose = ADP-L-glycero-beta-D-manno-heptose. It functions in the pathway nucleotide-sugar biosynthesis; ADP-L-glycero-beta-D-manno-heptose biosynthesis; ADP-L-glycero-beta-D-manno-heptose from D-glycero-beta-D-manno-heptose 7-phosphate: step 4/4. Functionally, catalyzes the interconversion between ADP-D-glycero-beta-D-manno-heptose and ADP-L-glycero-beta-D-manno-heptose via an epimerization at carbon 6 of the heptose. This Histophilus somni (strain 2336) (Haemophilus somnus) protein is ADP-L-glycero-D-manno-heptose-6-epimerase.